We begin with the raw amino-acid sequence, 515 residues long: 2-isopropylmalate synthase (515 aa).

The Pyruvate carboxyltransferase domain maps to 5-267 (VIIFDTTLRD…RTGINHEEIH (263 aa)). Asp14, His202, His204, and Asn238 together coordinate Mn(2+). The interval 392-515 (KLNYLSVQSG…EMKQKKIATV (124 aa)) is regulatory domain.

It belongs to the alpha-IPM synthase/homocitrate synthase family. LeuA type 1 subfamily. In terms of assembly, homodimer. The cofactor is Mn(2+).

The protein localises to the cytoplasm. It carries out the reaction 3-methyl-2-oxobutanoate + acetyl-CoA + H2O = (2S)-2-isopropylmalate + CoA + H(+). The protein operates within amino-acid biosynthesis; L-leucine biosynthesis; L-leucine from 3-methyl-2-oxobutanoate: step 1/4. Its function is as follows. Catalyzes the condensation of the acetyl group of acetyl-CoA with 3-methyl-2-oxobutanoate (2-ketoisovalerate) to form 3-carboxy-3-hydroxy-4-methylpentanoate (2-isopropylmalate). The sequence is that of 2-isopropylmalate synthase from Vibrio vulnificus (strain CMCP6).